The primary structure comprises 160 residues: Small ribosomal subunit protein uS7 (160 aa).

It belongs to the universal ribosomal protein uS7 family. In terms of assembly, part of the 30S ribosomal subunit. Contacts proteins S9 and S11.

Functionally, one of the primary rRNA binding proteins, it binds directly to 16S rRNA where it nucleates assembly of the head domain of the 30S subunit. Is located at the subunit interface close to the decoding center, probably blocks exit of the E-site tRNA. This Rickettsia conorii (strain ATCC VR-613 / Malish 7) protein is Small ribosomal subunit protein uS7.